The sequence spans 302 residues: Glycine--tRNA ligase alpha subunit (302 aa).

Belongs to the class-II aminoacyl-tRNA synthetase family. As to quaternary structure, tetramer of two alpha and two beta subunits.

It is found in the cytoplasm. It catalyses the reaction tRNA(Gly) + glycine + ATP = glycyl-tRNA(Gly) + AMP + diphosphate. This chain is Glycine--tRNA ligase alpha subunit, found in Wigglesworthia glossinidia brevipalpis.